Consider the following 92-residue polypeptide: N(2)-fixation sustaining protein CowN (92 aa).

This sequence belongs to the CowN family.

Is required to sustain N(2)-dependent growth in the presence of low levels of carbon monoxide (CO). Probably acts by protecting the N(2) fixation ability of the nitrogenase complex, which is inactivated in the presence of CO. This Rhodopseudomonas palustris (strain ATCC BAA-98 / CGA009) protein is N(2)-fixation sustaining protein CowN.